Consider the following 488-residue polypeptide: MTNPHFAWLPPEINSALMFAGPGAGPLLAAAAAWGGLAEELASAVSSFSSVTSELTSGSWLGPSAAAMMAVATQYMAWLGAAAAQAEQAAAQAAVTAGAFESALAATVQPAVVTANRGLMQVLAATNWLGFNTPAIMDIEAAYEQMWALDVAAMAAYHAEASAAASALAPWKQVLRNLGIDIGKNGQINLGFGNSGTGNVGNNNVGNNNWGSGNTGSSNVGTGNTGSSNIGSGNTGNSNVGLGNLGSGNVGFGNTGNGDFGFGLTGDHQFGFGGFNSGSGNVGIGNSGTGNVGFFNSGNGNMGIGNSGSLNSGLGNSGSMSTGFGTASMSSGMWQSMHGSDMASSTSLASSATYATGGTATLSSGILSSALAHTGGLNPALAGGLTPTAATPAAAAPAAAAPVAAAAADAGPVSAGANSGSTAGAGLRSPAAGYSGLYNSANSDAGARSVATREAPANAGAGIPRSSFYPNRETADSEADIQLPLRTE.

Disordered regions lie at residues 207-232 and 443-488; these read NNNWGSGNTGSSNVGTGNTGSSNIGS and SDAG…LRTE.

Belongs to the mycobacterial PPE family.

It localises to the secreted. Its function is as follows. Plays a major role in the integrity and stability of the capsule. The protein is PPE family protein PPE10 of Mycobacterium marinum (strain ATCC BAA-535 / M).